We begin with the raw amino-acid sequence, 165 residues long: MDKAIYPGTFDPITRGHEDLVRRASGLFREVVVAVAASSGKKPFFTQEERVAMVRQVLTDYPNVKVMPFSGLLMEFAQQQQARVIVRGLRAVSDFEYEFQMAGMNRTLYPDVETLFLTPSEQYMFISATIVREIALFGGNIEKFVHPLISTQLGMKIASKDKSSR.

Thr9 contacts substrate. ATP contacts are provided by residues 9 to 10 (TF) and His17. Positions 41, 73, and 87 each coordinate substrate. ATP-binding positions include 88 to 90 (GLR), Glu98, and 123 to 129 (YMFISAT).

It belongs to the bacterial CoaD family. As to quaternary structure, homohexamer. It depends on Mg(2+) as a cofactor.

Its subcellular location is the cytoplasm. The enzyme catalyses (R)-4'-phosphopantetheine + ATP + H(+) = 3'-dephospho-CoA + diphosphate. It participates in cofactor biosynthesis; coenzyme A biosynthesis; CoA from (R)-pantothenate: step 4/5. Reversibly transfers an adenylyl group from ATP to 4'-phosphopantetheine, yielding dephospho-CoA (dPCoA) and pyrophosphate. This is Phosphopantetheine adenylyltransferase from Nitrosospira multiformis (strain ATCC 25196 / NCIMB 11849 / C 71).